The chain runs to 192 residues: Pyridoxal 5'-phosphate synthase subunit PdxT (192 aa).

53–55 (GES) contacts L-glutamine. Cysteine 82 functions as the Nucleophile in the catalytic mechanism. Residues arginine 109 and 137–138 (IR) each bind L-glutamine. Active-site charge relay system residues include histidine 173 and glutamate 175.

It belongs to the glutaminase PdxT/SNO family. As to quaternary structure, in the presence of PdxS, forms a dodecamer of heterodimers. Only shows activity in the heterodimer.

The enzyme catalyses aldehydo-D-ribose 5-phosphate + D-glyceraldehyde 3-phosphate + L-glutamine = pyridoxal 5'-phosphate + L-glutamate + phosphate + 3 H2O + H(+). It catalyses the reaction L-glutamine + H2O = L-glutamate + NH4(+). The protein operates within cofactor biosynthesis; pyridoxal 5'-phosphate biosynthesis. Functionally, catalyzes the hydrolysis of glutamine to glutamate and ammonia as part of the biosynthesis of pyridoxal 5'-phosphate. The resulting ammonia molecule is channeled to the active site of PdxS. The protein is Pyridoxal 5'-phosphate synthase subunit PdxT of Methanoculleus marisnigri (strain ATCC 35101 / DSM 1498 / JR1).